We begin with the raw amino-acid sequence, 206 residues long: Homoserine/homoserine lactone efflux protein (206 aa).

The next 6 helical transmembrane spans lie at 5-25 (WWFA…SGAI), 45-65 (GLQT…GTLF), 68-88 (SLIA…WLGI), 117-137 (FVNL…PQFI), 148-168 (LILG…YATL), and 182-202 (MKAL…LLAS).

Belongs to the Rht family.

It is found in the cell membrane. Conducts the efflux of homoserine and homoserine lactone. This chain is Homoserine/homoserine lactone efflux protein (rhtB), found in Salmonella typhi.